A 254-amino-acid polypeptide reads, in one-letter code: Aspartate/glutamate leucyltransferase (254 aa).

The protein belongs to the R-transferase family. Bpt subfamily.

It is found in the cytoplasm. It carries out the reaction N-terminal L-glutamyl-[protein] + L-leucyl-tRNA(Leu) = N-terminal L-leucyl-L-glutamyl-[protein] + tRNA(Leu) + H(+). The enzyme catalyses N-terminal L-aspartyl-[protein] + L-leucyl-tRNA(Leu) = N-terminal L-leucyl-L-aspartyl-[protein] + tRNA(Leu) + H(+). In terms of biological role, functions in the N-end rule pathway of protein degradation where it conjugates Leu from its aminoacyl-tRNA to the N-termini of proteins containing an N-terminal aspartate or glutamate. This chain is Aspartate/glutamate leucyltransferase, found in Mesorhizobium japonicum (strain LMG 29417 / CECT 9101 / MAFF 303099) (Mesorhizobium loti (strain MAFF 303099)).